We begin with the raw amino-acid sequence, 433 residues long: ATP-dependent RNA helicase SUB2 (433 aa).

The segment covering 1 to 17 has biased composition (acidic residues); the sequence is MSAENQEELLDYSDSEE. The disordered stretch occupies residues 1–39; the sequence is MSAENQEELLDYSDSEEIAVPTTTQAGEGESANDKEADK. A Q motif motif is present at residues 49–77; the sequence is TGFRDFLLKPELLRAIGDCGFEHPSEVQQ. Positions 80 to 255 constitute a Helicase ATP-binding domain; that stretch reads IPQSILGTDV…KKFMQNPLEI (176 aa). Position 93-100 (93-100) interacts with ATP; that stretch reads AKSGLGKT. A DEAD box motif is present at residues 202 to 205; it reads DECD. The Helicase C-terminal domain maps to 267–428; sequence GLQQYYIKLE…EFPEEGVDPS (162 aa).

Belongs to the DEAD box helicase family. DECD subfamily.

It is found in the nucleus. The enzyme catalyses ATP + H2O = ADP + phosphate + H(+). Its function is as follows. ATP-binding RNA helicase involved in transcription elongation and required for the export of mRNA out of the nucleus. SUB2 also plays a role in pre-mRNA splicing and spliceosome assembly. May be involved in rDNA and telomeric silencing, and maintenance of genome integrity. The polypeptide is ATP-dependent RNA helicase SUB2 (SUB2) (Lodderomyces elongisporus (strain ATCC 11503 / CBS 2605 / JCM 1781 / NBRC 1676 / NRRL YB-4239) (Yeast)).